A 171-amino-acid polypeptide reads, in one-letter code: Transcriptional repressor NrdR (171 aa).

Residues methionine 1–asparagine 21 are disordered. A zinc finger lies at cysteine 3–cysteine 34. Positions glutamine 7 to serine 18 are enriched in basic and acidic residues. Residues isoleucine 49–aspartate 139 form the ATP-cone domain.

It belongs to the NrdR family. It depends on Zn(2+) as a cofactor.

In terms of biological role, negatively regulates transcription of bacterial ribonucleotide reductase nrd genes and operons by binding to NrdR-boxes. The sequence is that of Transcriptional repressor NrdR from Microcystis aeruginosa (strain NIES-843 / IAM M-2473).